Consider the following 494-residue polypeptide: UDP-glucose 6-dehydrogenase (494 aa).

Residues 11-16 (GAGYVG), Asp36, Arg41, and 89-93 (VNTPT) contribute to the NAD(+) site. The segment at 88 to 110 (SVNTPTKTYGMGKGRAADLKYIE) is disordered. At Lys107 the chain carries N6-acetyllysine. The tract at residues 129–135 (KSTVPVR) is allosteric switch region. Position 130–132 (130–132 (STV)) interacts with NAD(+). Catalysis depends on Glu161, which acts as the Proton donor/acceptor. Substrate is bound by residues 161–165 (EFLAE), 220–224 (KLAAN), Arg260, and 267–273 (KASVGFG). Glu165 serves as a coordination point for NAD(+). The Proton donor/acceptor role is filled by Lys220. Cys276 acts as the Nucleophile in catalysis. 276–279 (CFQK) contacts NAD(+). An important for formation of active hexamer structure region spans residues 321-325 (SLFNT). A substrate-binding site is contributed by 338 to 339 (FK). Residue Arg346 coordinates NAD(+). Arg442 is a substrate binding site. Residues 466-494 (VSSKRIPYAPSGEIPKFSLQDPPNKKPKV) form a disordered region. Residue Ser476 is modified to Phosphoserine.

It belongs to the UDP-glucose/GDP-mannose dehydrogenase family. Homohexamer.

It carries out the reaction UDP-alpha-D-glucose + 2 NAD(+) + H2O = UDP-alpha-D-glucuronate + 2 NADH + 3 H(+). The protein operates within nucleotide-sugar biosynthesis; UDP-alpha-D-glucuronate biosynthesis; UDP-alpha-D-glucuronate from UDP-alpha-D-glucose: step 1/1. UDP-alpha-D-xylose (UDX) acts as a feedback inhibitor. It binds at the same site as the substrate, but functions as allosteric inhibitor by triggering a conformation change that disrupts the active hexameric ring structure and gives rise to an inactive, horseshoe-shaped hexamer. Catalyzes the formation of UDP-alpha-D-glucuronate, a constituent of complex glycosaminoglycans. Required for the biosynthesis of chondroitin sulfate and heparan sulfate. Required for embryonic development via its role in the biosynthesis of glycosaminoglycans. Required for proper brain and neuronal development. The polypeptide is UDP-glucose 6-dehydrogenase (UGDH) (Pongo abelii (Sumatran orangutan)).